The primary structure comprises 210 residues: Protein GrpE (210 aa).

The tract at residues 1–31 (MAKDPQTPTDEELARAERDAEPQPGDATDDE) is disordered. The segment covering 12 to 21 (ELARAERDAE) has biased composition (basic and acidic residues).

The protein belongs to the GrpE family. In terms of assembly, homodimer.

Its subcellular location is the cytoplasm. In terms of biological role, participates actively in the response to hyperosmotic and heat shock by preventing the aggregation of stress-denatured proteins, in association with DnaK and GrpE. It is the nucleotide exchange factor for DnaK and may function as a thermosensor. Unfolded proteins bind initially to DnaJ; upon interaction with the DnaJ-bound protein, DnaK hydrolyzes its bound ATP, resulting in the formation of a stable complex. GrpE releases ADP from DnaK; ATP binding to DnaK triggers the release of the substrate protein, thus completing the reaction cycle. Several rounds of ATP-dependent interactions between DnaJ, DnaK and GrpE are required for fully efficient folding. The polypeptide is Protein GrpE (Chromohalobacter salexigens (strain ATCC BAA-138 / DSM 3043 / CIP 106854 / NCIMB 13768 / 1H11)).